Here is a 209-residue protein sequence, read N- to C-terminus: MGNVFVFDHPLIQHKLTYIRDKNTGTKEFRELVDEVAMLMAFEITRDLPVKEVNVDTPVTTAPSKVLAGKKLGLVPILRAGLGMVDGVRKLIPAAKVGHVGLYRDPETFKPVEYYVKLPNDIEEREIIVIDPMLATGGSANDAIAAIKKRGAKNIRLMCLIAAPEGVEVVKEAHPDVDIYLAAMDERLDDHGYIIPGLGDAGDRLFGTK.

Residues Arg79, Arg104, and 131–139 (DPMLATGGS) each bind 5-phospho-alpha-D-ribose 1-diphosphate. Uracil-binding positions include Ile194 and 199 to 201 (GDA). Asp200 serves as a coordination point for 5-phospho-alpha-D-ribose 1-diphosphate.

It belongs to the UPRTase family. Mg(2+) serves as cofactor.

The catalysed reaction is UMP + diphosphate = 5-phospho-alpha-D-ribose 1-diphosphate + uracil. It participates in pyrimidine metabolism; UMP biosynthesis via salvage pathway; UMP from uracil: step 1/1. Allosterically activated by GTP. Catalyzes the conversion of uracil and 5-phospho-alpha-D-ribose 1-diphosphate (PRPP) to UMP and diphosphate. The sequence is that of Uracil phosphoribosyltransferase from Oceanobacillus iheyensis (strain DSM 14371 / CIP 107618 / JCM 11309 / KCTC 3954 / HTE831).